The following is a 298-amino-acid chain: S-adenosyl-L-methionine-dependent methyltransferase dpfgK (298 aa).

Belongs to the methyltransferase superfamily.

Its pathway is secondary metabolite biosynthesis; terpenoid biosynthesis. S-adenosyl-L-methionine-dependent methyltransferase; part of the gene cluster that mediates the biosynthesis of diterpenoid pyrones. The first step of the pathway is the synthesis of the alpha-pyrone moiety by the polyketide synthase dpfgA via condensation of one acetyl-CoA starter unit with 3 malonyl-CoA units and 2 methylations. The alpha-pyrone is then combined with geranylgeranyl pyrophosphate (GGPP) formed by the GGPP synthase dpfgD through the action of the prenyltransferase dpfgC to yield a linear alpha-pyrone diterpenoid. Subsequent steps in the diterpenoid pyrone biosynthetic pathway involve the decalin core formation, which is initiated by the epoxidation of the C10-C11 olefin by the FAD-dependent oxidoreductase dpfgE, and is followed by a cyclization cascade catalyzed by the terpene cyclase dpfgB. The short chain dehydrogenase/reductase dpfgG then oxidizes the 8S hydroxy group to a ketone and the short chain dehydrogenase/reductase dpfgH reduces the ketone to the 8R hydroxy group to yield higginsianin B. Higginsianin B is further methylated by the methyltransferase dpfgI to produce the intermediate named FDDP B. The cytochrome P450 monooxygenase dfgpJ then catalyzes a three-step oxidation at C-27 to generate a carboxylic acid as well as C-26 hydroxylation. Finally, methyltransferase dpfgK methylates the carboxylic acid generated by dpfgJ, yielding the final diterpenoid pyrones from the pathway which were named FDDP D and FDDP E. This chain is S-adenosyl-L-methionine-dependent methyltransferase dpfgK, found in Gibberella zeae (strain ATCC MYA-4620 / CBS 123657 / FGSC 9075 / NRRL 31084 / PH-1) (Wheat head blight fungus).